A 683-amino-acid polypeptide reads, in one-letter code: Outer dynein arm-docking complex subunit 4 (683 aa).

TPR repeat units follow at residues 13 to 46 (FPSY…QSGD), 47 to 80 (KNCL…DPTF), 48 to 80 (NCLV…DPTF), and 81 to 114 (CKGI…RPDR). Residues 158-179 (QQKPHPVRQLIHHPKRESKRKG) form a disordered region. Positions 167-179 (LIHHPKRESKRKG) are enriched in basic residues. 5 TPR repeats span residues 275-311 (LKSL…NKEE), 320-353 (GNLY…AKEY), 360-393 (SRAL…AKTT), 397-430 (TWLF…AEEE), and 437-470 (LNAS…AKLV). 2 disordered regions span residues 510–537 (ENAT…PEKV) and 553–683 (VLSK…EPIE). Composition is skewed to basic and acidic residues over residues 521-537 (TAKE…PEKV), 566-590 (PEQR…ERGP), 602-620 (GRTE…RPSE), and 629-675 (SSPR…IEKD). The TPR 15 repeat unit spans residues 592 to 625 (DTAKGQFGEAGRTEQNREETREIYRRPSELDQNL).

In terms of assembly, component of the outer dynein arm-docking complex along with ODAD1, ODAD2 and ODAD3. Interacts with ODAD1; this interaction may facilitate the recruitment and/or attachment of outer dynein arm docking complex proteins, including ODAD1, ODAD3 and ODAD2, to ciliary axonemes. Interacts with components of the IFT complex A, including IFT140, TTC21B/IFT139 and WDR19/IFT144, and the IFT complex B, including IFT46, IFT52 and IFT57. Interacts with CFAP53. Expressed in trachea multiciliated cells.

It localises to the cytoplasm. Its subcellular location is the cytoskeleton. The protein localises to the cilium axoneme. Functionally, component of the outer dynein arm-docking complex (ODA-DC) that mediates outer dynein arms (ODA) binding onto the doublet microtubule. Plays an essential role for the assembly of ODA-DC and for the docking of ODA in ciliary axoneme. The polypeptide is Outer dynein arm-docking complex subunit 4 (Bos taurus (Bovine)).